Here is a 611-residue protein sequence, read N- to C-terminus: Histone acetyltransferase KAT7 (611 aa).

The disordered stretch occupies residues 1-173 (MPRRKRNAGS…SDLSHRPKRR (173 aa)). S10 is modified (phosphoserine). The span at 42–57 (VTRSSARLSQSSQDSS) shows a compositional bias: low complexity. A phosphoserine; by ATR mark is found at S50 and S53. The residue at position 57 (S57) is a Phosphoserine; by PLK1. Position 64 is a phosphoserine (S64). Phosphothreonine; by CDK1 occurs at positions 85 and 88. A compositionally biased stretch (polar residues) spans 96–105 (QTRSSGSETE). S102 is subject to Phosphoserine. T104 is subject to Phosphothreonine. Over residues 110-125 (FSDRETKNTADHDESP) the composition is skewed to basic and acidic residues. Phosphoserine is present on residues S111 and S124. The residue at position 128 (T128) is a Phosphothreonine. The segment covering 134 to 145 (PSSESDIDISSP) has biased composition (low complexity). Residues 148–168 (SHDESIAKDMSLKDSGSDLSH) show a composition bias toward basic and acidic residues. Phosphoserine is present on residues S158, S162, S164, and S178. The CCHHC-type zinc-finger motif lies at 176 to 219 (HESYNFNMKCPTPGCNSLGHLTGKHERHFSISGCPLYHNLSADE). 2 positions are modified to N6-acetyllysine: K199 and K277. A Glycyl lysine isopeptide (Lys-Gly) (interchain with G-Cter in SUMO2) cross-link involves residue K323. The MYST-type HAT domain occupies 332–607 (EGSNMIKTIA…MDPSCLKWTP (276 aa)). A Glycyl lysine isopeptide (Lys-Gly) (interchain with G-Cter in ubiquitin) cross-link involves residue K338. A C2HC MYST-type zinc finger spans residues 365 to 390 (LYMCEFCLKYMKSQTILRRHMAKCVW). 4 residues coordinate Zn(2+): C368, C371, H384, and C388. Residue K432 is modified to N6-acetyllysine; by autocatalysis. Residues 475–477 (ILT) and 483–488 (RQGYGK) each bind acetyl-CoA. Position 506 is a phosphoserine (S506). The active-site Proton donor/acceptor is the E508. Positions 512 and 521 each coordinate acetyl-CoA.

The protein belongs to the MYST (SAS/MOZ) family. In terms of assembly, component of the HBO1 complex composed of KAT7/HBO1, MEAF6, ING4 or ING5, and one scaffold subunit: complexes containing BRPF scaffold (BRPF1, BRD1/BRPF2 or BRPF3) direct KAT7/HBO1 specificity towards H3K14ac, while complexes containing JADE scaffold (JADE1, JADE2 and JADE3) mediate acetylation of histone H4. Interacts with MCM2 and ORC1. Interacts with the androgen receptor (AR); in the presence of dihydrotestosterone. Interacts with CDT1. Interacts with MAP2K1 and CUL1. Interacts with p53/TP53; leading to inhibit histone acetyltransferase activity. Interacts with MIS18BP1. Phosphorylated at Ser-50 and Ser-53 by ATR in response to DNA damage, promoting its ubiquitination by the CRL4(DDB2) complex and subsequent degradation. Phosphorylation at Ser-50 and Ser-53 by ATR in response to ultraviolet-induced DNA, promotes localization to DNA damage sites. Phosphorylation at Ser-57 by PLK1 during mitosis seems important for prereplicative complex formation and DNA replication licensing, and requires prior phosphorylation at Thr-85 and Thr-88 by CDK1. Phosphorylated by MAP2K1, which accelerates its degradation. In terms of processing, ubiquitinated at Lys-338, leading to proteasomal degradation. Ubiquitinated by the CRL4(DDB2) complex following phosphorylation by ATR, leading to its subsequent degradation. Post-translationally, autoacetylation at Lys-432 is required for proper function. As to expression, ubiquitously expressed, with highest levels in testis.

Its subcellular location is the nucleus. It localises to the chromosome. The protein localises to the centromere. It is found in the cytoplasm. The protein resides in the cytosol. The catalysed reaction is L-lysyl-[histone] + acetyl-CoA = N(6)-acetyl-L-lysyl-[histone] + CoA + H(+). With respect to regulation, histone acetyltransferase activity is inhibited by GMNN in the context of a complex with CDT1, inhibiting histone H4 acetylation and DNA replication licensing. Selectively inhibited by WM-3835 (N'-(4-fluoro-5-methyl-[1,1'-biphenyl]-3-carbonyl)-3- hydroxybenzenesulfonohydrazide) inhibitor. Functionally, catalytic subunit of histone acetyltransferase HBO1 complexes, which specifically mediate acetylation of histone H3 at 'Lys-14' (H3K14ac), thereby regulating various processes, such as gene transcription, protein ubiquitination, immune regulation, stem cell pluripotent and self-renewal maintenance and embryonic development. Some complexes also catalyze acetylation of histone H4 at 'Lys-5', 'Lys-8' and 'Lys-12' (H4K5ac, H4K8ac and H4K12ac, respectively), regulating DNA replication initiation, regulating DNA replication initiation. Specificity of the HBO1 complexes is determined by the scaffold subunit: complexes containing BRPF scaffold (BRPF1, BRD1/BRPF2 or BRPF3) direct KAT7/HBO1 specificity towards H3K14ac, while complexes containing JADE (JADE1, JADE2 and JADE3) scaffold direct KAT7/HBO1 specificity towards histone H4. H3K14ac promotes transcriptional elongation by facilitating the processivity of RNA polymerase II. Acts as a key regulator of hematopoiesis by forming a complex with BRD1/BRPF2, directing KAT7/HBO1 specificity towards H3K14ac and promoting erythroid differentiation. H3K14ac is also required for T-cell development. KAT7/HBO1-mediated acetylation facilitates two consecutive steps, licensing and activation, in DNA replication initiation: H3K14ac facilitates the activation of replication origins, and histone H4 acetylation (H4K5ac, H4K8ac and H4K12ac) facilitates chromatin loading of MCM complexes, promoting DNA replication licensing. Acts as a positive regulator of centromeric CENPA assembly: recruited to centromeres and mediates histone acetylation, thereby preventing centromere inactivation mediated by SUV39H1, possibly by increasing histone turnover/exchange. Involved in nucleotide excision repair: phosphorylation by ATR in response to ultraviolet irradiation promotes its localization to DNA damage sites, where it mediates histone acetylation to facilitate recruitment of XPC at the damaged DNA sites. Acts as an inhibitor of NF-kappa-B independently of its histone acetyltransferase activity. Plays a central role in the maintenance of leukemia stem cells in acute myeloid leukemia (AML). Acts by mediating acetylation of histone H3 at 'Lys-14' (H3K14ac), thereby facilitating the processivity of RNA polymerase II to maintain the high expression of key genes, such as HOXA9 and HOXA10 that help to sustain the functional properties of leukemia stem cells. The sequence is that of Histone acetyltransferase KAT7 from Homo sapiens (Human).